Reading from the N-terminus, the 1202-residue chain is Nitric oxide synthase 3 (1202 aa).

The disordered stretch occupies residues 1-70 (MGNLKSVGQE…PPDGPKFPRV (70 aa)). Gly2 carries N-myristoyl glycine lipidation. S-palmitoyl cysteine attachment occurs at residues Cys15 and Cys26. Over residues 15 to 27 (CGLGLGLGLGLCG) the composition is skewed to gly residues. Positions 33 to 65 (SPAPEPSQAPVPPSPTRPAPDHSPPLTRPPDGP) are enriched in pro residues. Residues Cys93 and Cys98 each contribute to the Zn(2+) site. The interaction with NOSIP stretch occupies residues 97–485 (RCLGSLVFPR…PDPWKGSAAK (389 aa)). Ser101 is a binding site for (6R)-L-erythro-5,6,7,8-tetrahydrobiopterin. Cys183 contacts heme b. L-arginine contacts are provided by Gln246, Trp355, Tyr356, and Glu360. Residues Ala445, Trp446, and Phe459 each contribute to the (6R)-L-erythro-5,6,7,8-tetrahydrobiopterin site. A heme b-binding site is contributed by Tyr474. The tract at residues 489–509 (ITRKKTFKEVANAVKISASLM) is calmodulin-binding. Thr494 is modified (phosphothreonine; by AMPK). Positions 519–702 (ATILYGSETG…AFRGWAQAAF (184 aa)) constitute a Flavodoxin-like domain. 6 residues coordinate FMN: Ser525, Glu526, Thr527, Arg529, Ser571, and Thr572. Phosphoserine is present on residues Ser614, Ser632, and Ser637. Residues Ser653, Cys660, Glu686, and Gln690 each coordinate FMN. The 247-residue stretch at 755 to 1001 (RKMFQATILS…IRGAPSFRLP (247 aa)) folds into the FAD-binding FR-type domain. NADP(+) is bound at residue Arg775. His797 lines the FAD pocket. The interval 817–843 (EDPPPSTEPVAVEQLEKGSPGGPPPGW) is disordered. The residue at position 835 (Ser835) is a Phosphoserine. 9 residues coordinate FAD: Arg937, Tyr939, Ser940, Thr955, Ala957, Tyr961, Val974, Cys975, and Ser976. Thr1015, Arg1048, Ser1077, Arg1078, Lys1084, Tyr1086, and Gln1088 together coordinate NADP(+). A Phosphothreonine modification is found at Thr1174. A Phosphoserine; by AMPK modification is found at Ser1176. A Phosphoserine modification is found at Ser1178.

It belongs to the NOS family. Homodimer. Interacts with NOSIP and NOSTRIN. Interacts with HSP90AB1. Forms a complex with ASL, ASS1 and SLC7A1; the complex regulates cell-autonomous L-arginine synthesis and citrulline recycling while channeling extracellular L-arginine to nitric oxide synthesis pathway. Heme b serves as cofactor. Requires FAD as cofactor. The cofactor is FMN. (6R)-L-erythro-5,6,7,8-tetrahydrobiopterin is required as a cofactor. In terms of processing, phosphorylation by AMPK at Ser-1176 in the presence of Ca(2+)-calmodulin (CaM) activates activity. In absence of Ca(2+)-calmodulin, AMPK also phosphorylates Thr-494, resulting in inhibition of activity. As to expression, expressed constitutively by vascular endothelium. Detected in alveolar and serosal epithelial cells as well as in endothelial cells in one day old rat. In adult lung, detected in rare endothelial cells.

The protein resides in the membrane. Its subcellular location is the caveola. It localises to the cytoplasm. The protein localises to the cytoskeleton. It is found in the golgi apparatus. The protein resides in the cell membrane. The enzyme catalyses 2 L-arginine + 3 NADPH + 4 O2 + H(+) = 2 L-citrulline + 2 nitric oxide + 3 NADP(+) + 4 H2O. Its activity is regulated as follows. Stimulated by calcium/calmodulin. Inhibited by NOSIP and NOSTRIN. Produces nitric oxide (NO) which is implicated in vascular smooth muscle relaxation through a cGMP-mediated signal transduction pathway. NO mediates vascular endothelial growth factor (VEGF)-induced angiogenesis in coronary vessels and promotes blood clotting through the activation of platelets. This is Nitric oxide synthase 3 from Rattus norvegicus (Rat).